Consider the following 67-residue polypeptide: DNA-directed RNA polymerase subunit omega (67 aa).

This sequence belongs to the RNA polymerase subunit omega family. The RNAP catalytic core consists of 2 alpha, 1 beta, 1 beta' and 1 omega subunit. When a sigma factor is associated with the core the holoenzyme is formed, which can initiate transcription.

It carries out the reaction RNA(n) + a ribonucleoside 5'-triphosphate = RNA(n+1) + diphosphate. Its function is as follows. Promotes RNA polymerase assembly. Latches the N- and C-terminal regions of the beta' subunit thereby facilitating its interaction with the beta and alpha subunits. The polypeptide is DNA-directed RNA polymerase subunit omega (Burkholderia pseudomallei (strain 1106a)).